Here is a 561-residue protein sequence, read N- to C-terminus: Excitatory amino acid transporter 4 (561 aa).

Over 1-52 the chain is Cytoplasmic; that stretch reads MSSHGNSLFLRESGAGGGCLQGLQDSLQQRALRTRLRLQTMTREHVRRFLRR. Position 2 is a phosphoserine (S2). Transmembrane regions (helical) follow at residues 53–73, 96–116, and 130–150; these read NAFILLTVSAVIIGVSLAFAL, MLQMLVLPLIVSSLVTGMASL, and VYYMVTTVIAVFIGILMVTII. N-linked (GlcNAc...) asparagine glycosylation is found at N213, N229, and N236. 3 helical membrane passes run 259 to 282, 292 to 319, and 341 to 362; these read SANGINALGLVVFSVAFGLVIGGM, FFDSLNEAIMRLVGIIIWYAPVGILFLI, and LTVIVGLFLHAGGVLPLIYFLV. Residues 368 to 398 constitute an intramembrane region (discontinuously helical); it reads FPFIGGMLQALITAMGTSSSSATLPITFRCL. Residue 385 to 387 coordinates L-aspartate; it reads SSS. The chain crosses the membrane as a helical span at residues 408–434; sequence ITRFVLPVGATVNMDGTALYEALAAIF. G416, T418, and N420 together coordinate Na(+). Residues T424, 465-469, D498, and N505 contribute to the L-aspartate site; that span reads IPQAG. The discontinuously helical intramembrane region spans 448–481; sequence ITTISITATAASVGAAGIPQAGLVTMVIVLTSVG. The helical transmembrane segment at 495–516 threads the bilayer; it reads WFLDRLRTMTNVLGDSIGAAVI. Positions 505 and 509 each coordinate Na(+).

The protein belongs to the dicarboxylate/amino acid:cation symporter (DAACS) (TC 2.A.23) family. SLC1A6 subfamily. Homotrimer. In terms of tissue distribution, brain specific.

The protein resides in the cell membrane. It catalyses the reaction K(+)(in) + L-glutamate(out) + 3 Na(+)(out) + H(+)(out) = K(+)(out) + L-glutamate(in) + 3 Na(+)(in) + H(+)(in). It carries out the reaction K(+)(in) + L-aspartate(out) + 3 Na(+)(out) + H(+)(out) = K(+)(out) + L-aspartate(in) + 3 Na(+)(in) + H(+)(in). The enzyme catalyses D-aspartate(out) + K(+)(in) + 3 Na(+)(out) + H(+)(out) = D-aspartate(in) + K(+)(out) + 3 Na(+)(in) + H(+)(in). Functionally, sodium-dependent, high-affinity amino acid transporter that mediates the uptake of L-glutamate and also L-aspartate and D-aspartate. Functions as a symporter that transports one amino acid molecule together with two or three Na(+) ions and one proton, in parallel with the counter-transport of one K(+) ion. Mediates Cl(-) flux that is not coupled to amino acid transport; this avoids the accumulation of negative charges due to aspartate and Na(+) symport. Plays a redundant role in the rapid removal of released glutamate from the synaptic cleft, which is essential for terminating the postsynaptic action of glutamate. The sequence is that of Excitatory amino acid transporter 4 (Slc1a6) from Mus musculus (Mouse).